The following is a 471-amino-acid chain: UDP-N-acetylmuramate--L-alanine ligase (471 aa).

114 to 120 is an ATP binding site; the sequence is GTHGKTT.

This sequence belongs to the MurCDEF family.

It is found in the cytoplasm. The catalysed reaction is UDP-N-acetyl-alpha-D-muramate + L-alanine + ATP = UDP-N-acetyl-alpha-D-muramoyl-L-alanine + ADP + phosphate + H(+). The protein operates within cell wall biogenesis; peptidoglycan biosynthesis. Cell wall formation. The protein is UDP-N-acetylmuramate--L-alanine ligase of Rhizobium meliloti (strain 1021) (Ensifer meliloti).